We begin with the raw amino-acid sequence, 477 residues long: Stromelysin-1 (477 aa).

The signal sequence occupies residues Met1–Ala17. Residues Tyr18 to His99 constitute a propeptide, activation peptide. A Cysteine switch motif is present at residues Pro90–Val97. Residue Cys92 participates in Zn(2+) binding. Positions 124 and 158 each coordinate Ca(2+). Zn(2+)-binding residues include His168 and Asp170. Residues Asp175, Gly176, Gly178, and Val180 each contribute to the Ca(2+) site. His183 is a binding site for Zn(2+). The Ca(2+) site is built by Gly190, Asn192, and Asp194. His196 contributes to the Zn(2+) binding site. Residues Asp198, Asp199, and Glu201 each contribute to the Ca(2+) site. His218 serves as a coordination point for Zn(2+). Glu219 is an active-site residue. Residues His222 and His228 each coordinate Zn(2+). The tract at residues Leu262–Pro287 is disordered. A compositionally biased stretch (pro residues) spans Pro276 to Gly285. 4 Hemopexin repeats span residues Pro287–Leu336, Pro337–Pro383, Val385–Ile433, and Asp434–Cys477. Cys290 and Cys477 form a disulfide bridge. Asp297 serves as a coordination point for Ca(2+). Positions 389 and 438 each coordinate Ca(2+).

Belongs to the peptidase M10A family. It depends on Ca(2+) as a cofactor. Zn(2+) serves as cofactor. Post-translationally, directly cleaved by HTRA2 to produce active form.

The protein resides in the secreted. It localises to the extracellular space. It is found in the extracellular matrix. Its subcellular location is the nucleus. The protein localises to the cytoplasm. The enzyme catalyses Preferential cleavage where P1', P2' and P3' are hydrophobic residues.. Its activity is regulated as follows. Enzymatic activity is activated by HTRA2 in dopaminergic cells upon mitochondrial stress. Metalloproteinase with a rather broad substrate specificity that can degrade fibronectin, laminin, gelatins of type I, III, IV, and V; collagens III, IV, X, and IX, and cartilage proteoglycans. Activates different molecules including growth factors, plasminogen or other matrix metalloproteinases such as MMP9. Once released into the extracellular matrix (ECM), the inactive pro-enzyme is activated by the plasmin cascade signaling pathway. Also acts intracellularly. For example, in dopaminergic neurons, gets activated by the serine protease HTRA2 upon stress and plays a pivotal role in DA neuronal degeneration by mediating microglial activation and alpha-synuclein/SNCA cleavage. In addition, plays a role in immune response and possesses antiviral activity against various viruses such as vesicular stomatitis virus, influenza A virus (H1N1) and human herpes virus 1. Mechanistically, translocates from the cytoplasm into the cell nucleus upon virus infection to influence NF-kappa-B activities. In Homo sapiens (Human), this protein is Stromelysin-1 (MMP3).